We begin with the raw amino-acid sequence, 434 residues long: Perilipin-3 (434 aa).

The interval 1–22 (MSADGAEADGSTQVTVEEPVQQ) is disordered. N-acetylserine is present on Ser2. At Ser31 the chain carries Phosphoserine. The residue at position 65 (Lys65) is an N6-acetyllysine. Ser91 is modified (phosphoserine). Lys122 participates in a covalent cross-link: Glycyl lysine isopeptide (Lys-Gly) (interchain with G-Cter in SUMO1). 2 positions are modified to phosphoserine: Ser130 and Ser148. A Phosphothreonine modification is found at Thr170. 2 positions are modified to phosphoserine: Ser175 and Ser179. Thr216 bears the Phosphothreonine mark. Phosphoserine occurs at positions 217 and 241. Phosphotyrosine is present on Tyr251. 2 coiled-coil regions span residues 252–280 (EHSL…SLME) and 353–377 (TNVK…SSIH).

It belongs to the perilipin family. Homooligomer. Interacts with M6PR (via the cytoplasmic domain). Interacts with IGF2R (via the cytoplasmic domain). Post-translationally, phosphorylation at Tyr-251 by isoform 1 of CHKA (CHKalpha2) promotes dissociation from lipid droplets: dissociation is followed by recruitment of autophagosome machinery to lipid droplets and subsequent lipid droplet lipolysis.

It is found in the lipid droplet. The protein resides in the endosome membrane. Its subcellular location is the cytoplasm. Structural component of lipid droplets, which is required for the formation and maintenance of lipid storage droplets. Required for the transport of mannose 6-phosphate receptors (MPR) from endosomes to the trans-Golgi network. In Pongo abelii (Sumatran orangutan), this protein is Perilipin-3 (PLIN3).